We begin with the raw amino-acid sequence, 572 residues long: MSRKMFSCDFETTTKLDDCRVWAYGYMEIGNLDNYKIGNSLDEFMQWVMEIQADLYFHNLKFDGAFIVNWLEQHGFKWSNEGLPNTYNTIISKMGQWYMIDICFGYKGKRKLHTVIYDSLKKLPFPVKKIAKDFQLPLLKGDIDYHTERPVGHEITPEEYEYIKNDIEIIARALDIQFKQGLDRMTAGSDSLKGFKDILSTKKFNKVFPKLSLPMDKEIRKAYRGGFTWLNDKYKEKEIGEGMVFDVNSLYPSQMYSRPLPYGAPIVFQGKYEKDEQYPLYIQRIRFEFELKEGYIPTIQIKKNPFFKGNEYLKNSGVEPVELYLTNVDLELIQEHYELYNVEYIDGFKFREKTGLFKDFIDKWTYVKTHEEGAKKQLAKLMLNSLYGKFASNPDVTGKVPYLKDDGSLGFRVGDEEYKDPVYTPMGVFITAWARFTTITAAQACYDRIIYCDTDSIHLTGTEVPEIIKDIVDPKKLGYWAHESTFKRAKYLRQKTYIQDIYVKEVDGKLKECSPDEATTTKFSVKCAGMTDTIKKKVTFDNFAVGFSSMGKPKPVQVNGGVVLVDSVFTIK.

A 3'-5' exonuclease and strand displacement activities region spans residues 1 to 222; that stretch reads MSRKMFSCDF…LPMDKEIRKA (222 aa). The interaction with the primer terminal protein stretch occupies residues 56 to 66; sequence YFHNLKFDGAF. 2 residues coordinate Mg(2+): Asp142 and Asp166. The interval 223-226 is DNA-binding; Involved in the formation of a stable complex between TP and phi29 DNA polymerase; it reads YRGG. The tract at residues 227–572 is initiation, polymerization and pyrophosphorolytic activities; that stretch reads FTWLNDKYKE…VLVDSVFTIK (346 aa). Residues Asp246 and Val247 each coordinate Mg(2+). 3 residues coordinate 5-methyl-UTP: Tyr251, Lys368, and Lys380. Residues Asp453 and Asp455 each contribute to the Mg(2+) site. A 5-methyl-UTP-binding site is contributed by Asp455.

Belongs to the DNA polymerase type-B family. In terms of assembly, interacts with the primer terminal protein; this interaction allows the initiation of TP-primed DNA replication at both viral DNA ends. Interacts with DNA. The cofactor is Mg(2+).

The catalysed reaction is DNA(n) + a 2'-deoxyribonucleoside 5'-triphosphate = DNA(n+1) + diphosphate. Functionally, polymerase responsible for protein-primed viral DNA replication by strand displacement with high processivity and fidelity. To start replication, the DNA polymerase forms a heterodimer with a free primer terminal protein (TP), recognizes the replication origins at both 5' ends of the linear chromosome, and initiates replication using as primer the OH-group of Ser-232 of the TP. This polymerase possesses three enzymatic activities: DNA synthesis (polymerase), primer terminal protein (TP) deoxynucleotidylation, which is the formation of a covalent linkage (phosphoester) between the hydroxyl group of a specific serine residue in TP and 5'-dAMP, a reaction directed by the second T at the 3' end, and 3' to 5' exonuclease activity. Exonuclease activity has a proofreading purpose. This Bacillus phage M2 (Bacteriophage M2) protein is DNA polymerase (G).